Reading from the N-terminus, the 104-residue chain is N(4)-acetylcytidine amidohydrolase (104 aa).

One can recognise an ASCH domain in the interval 7 to 95 (MTFFERFETD…IQDIYPGISQ (89 aa)). Catalysis depends on Lys-22, which acts as the Proton acceptor. Thr-25 (nucleophile) is an active-site residue. The active-site Proton donor is Glu-75.

It belongs to the N(4)-acetylcytidine amidohydrolase family.

It carries out the reaction N(4)-acetylcytidine + H2O = cytidine + acetate + H(+). It catalyses the reaction N(4)-acetyl-2'-deoxycytidine + H2O = 2'-deoxycytidine + acetate + H(+). The catalysed reaction is N(4)-acetylcytosine + H2O = cytosine + acetate + H(+). In terms of biological role, catalyzes the hydrolysis of N(4)-acetylcytidine (ac4C). This Vibrio atlanticus (strain LGP32) (Vibrio splendidus (strain Mel32)) protein is N(4)-acetylcytidine amidohydrolase.